Consider the following 542-residue polypeptide: CTP synthase (542 aa).

Residues 1–265 (MTRYIFVTGG…DDIVVERFGL (265 aa)) are amidoligase domain. Ser-13 contacts CTP. UTP is bound at residue Ser-13. ATP contacts are provided by residues 14–19 (SLGKGI) and Asp-71. Mg(2+) contacts are provided by Asp-71 and Glu-139. Residues 146–148 (DIE), 186–191 (KTKPTQ), and Lys-222 contribute to the CTP site. Residues 186-191 (KTKPTQ) and Lys-222 each bind UTP. One can recognise a Glutamine amidotransferase type-1 domain in the interval 290 to 541 (TIAMVGKYME…VNAALKYSGK (252 aa)). L-glutamine is bound at residue Gly-351. The Nucleophile; for glutamine hydrolysis role is filled by Cys-378. L-glutamine is bound by residues 379 to 382 (LGMQ), Glu-402, and Arg-469. Residues His-514 and Glu-516 contribute to the active site.

Belongs to the CTP synthase family. Homotetramer.

The enzyme catalyses UTP + L-glutamine + ATP + H2O = CTP + L-glutamate + ADP + phosphate + 2 H(+). It catalyses the reaction L-glutamine + H2O = L-glutamate + NH4(+). It carries out the reaction UTP + NH4(+) + ATP = CTP + ADP + phosphate + 2 H(+). It participates in pyrimidine metabolism; CTP biosynthesis via de novo pathway; CTP from UDP: step 2/2. Its activity is regulated as follows. Allosterically activated by GTP, when glutamine is the substrate; GTP has no effect on the reaction when ammonia is the substrate. The allosteric effector GTP functions by stabilizing the protein conformation that binds the tetrahedral intermediate(s) formed during glutamine hydrolysis. Inhibited by the product CTP, via allosteric rather than competitive inhibition. Catalyzes the ATP-dependent amination of UTP to CTP with either L-glutamine or ammonia as the source of nitrogen. Regulates intracellular CTP levels through interactions with the four ribonucleotide triphosphates. The protein is CTP synthase of Pseudomonas aeruginosa (strain LESB58).